The primary structure comprises 489 residues: Anthranilate synthase component 1 1 (489 aa).

262 to 264 is an L-tryptophan binding site; sequence PYS. Positions 288-309 are disordered; that stretch reads DRIETEPIAGTRPRGETPDADD. 297 to 298 contributes to the chorismate binding site; sequence GT. The segment covering 300–309 has biased composition (basic and acidic residues); that stretch reads PRGETPDADD. Position 324 (Glu-324) interacts with Mg(2+). Chorismate is bound by residues Tyr-412, Arg-432, 446-448, and Gly-448; that span reads GAG. Glu-461 is a Mg(2+) binding site.

The protein belongs to the anthranilate synthase component I family. Tetramer of two components I and two components II. Mg(2+) is required as a cofactor.

The enzyme catalyses chorismate + L-glutamine = anthranilate + pyruvate + L-glutamate + H(+). Its pathway is amino-acid biosynthesis; L-tryptophan biosynthesis; L-tryptophan from chorismate: step 1/5. The chain is Anthranilate synthase component 1 1 (trpE1) from Haloarcula marismortui (strain ATCC 43049 / DSM 3752 / JCM 8966 / VKM B-1809) (Halobacterium marismortui).